A 269-amino-acid chain; its full sequence is Signal recognition particle receptor subunit beta (269 aa).

Residues 35-55 form a helical membrane-spanning segment; it reads LLSVAVAVLAVLLTLVFWKFI. GTP-binding positions include 69-77 and 90-93; these read GLCDSGKTL and TQTS. Ser-110 carries the post-translational modification Phosphoserine. Position 118 (Gly-118) interacts with GTP. Thr-212 is modified (phosphothreonine). Residue Ala-246 coordinates GTP.

This sequence belongs to the SRP receptor beta subunit family. As to quaternary structure, heterodimer with SRPRA.

The protein resides in the endoplasmic reticulum membrane. Functionally, component of the signal recognition particle (SRP) complex receptor (SR). Ensures, in conjunction with the SRP complex, the correct targeting of the nascent secretory proteins to the endoplasmic reticulum membrane system. May mediate the membrane association of SR. The sequence is that of Signal recognition particle receptor subunit beta (Srprb) from Rattus norvegicus (Rat).